The following is a 383-amino-acid chain: tRNA-specific 2-thiouridylase MnmA (383 aa).

ATP is bound by residues 29-36 and M55; that span reads GMSGGVDS. The interval 115–117 is interaction with target base in tRNA; the sequence is NPD. C120 serves as the catalytic Nucleophile. A disulfide bridge connects residues C120 and C217. G145 provides a ligand contact to ATP. Residues 167 to 169 are interaction with tRNA; that stretch reads KDQ. The active-site Cysteine persulfide intermediate is C217. Positions 329–330 are interaction with tRNA; it reads RY.

This sequence belongs to the MnmA/TRMU family.

Its subcellular location is the cytoplasm. The enzyme catalyses S-sulfanyl-L-cysteinyl-[protein] + uridine(34) in tRNA + AH2 + ATP = 2-thiouridine(34) in tRNA + L-cysteinyl-[protein] + A + AMP + diphosphate + H(+). Catalyzes the 2-thiolation of uridine at the wobble position (U34) of tRNA, leading to the formation of s(2)U34. This chain is tRNA-specific 2-thiouridylase MnmA, found in Histophilus somni (strain 2336) (Haemophilus somnus).